The following is a 579-amino-acid chain: Sulfite reductase [NADPH] hemoprotein beta-component (579 aa).

The [4Fe-4S] cluster site is built by cysteine 434, cysteine 440, cysteine 479, and cysteine 483. Cysteine 483 contributes to the siroheme binding site.

This sequence belongs to the nitrite and sulfite reductase 4Fe-4S domain family. As to quaternary structure, alpha(8)-beta(8). The alpha component is a flavoprotein, the beta component is a hemoprotein. It depends on siroheme as a cofactor. The cofactor is [4Fe-4S] cluster.

The catalysed reaction is hydrogen sulfide + 3 NADP(+) + 3 H2O = sulfite + 3 NADPH + 4 H(+). Its pathway is sulfur metabolism; hydrogen sulfide biosynthesis; hydrogen sulfide from sulfite (NADPH route): step 1/1. Its function is as follows. Component of the sulfite reductase complex that catalyzes the 6-electron reduction of sulfite to sulfide. This is one of several activities required for the biosynthesis of L-cysteine from sulfate. This chain is Sulfite reductase [NADPH] hemoprotein beta-component, found in Salmonella choleraesuis (strain SC-B67).